The sequence spans 384 residues: Probable RNA 3'-terminal phosphate cyclase-like protein (384 aa).

Belongs to the RNA 3'-terminal cyclase family. Type 2 subfamily. As to quaternary structure, part of the small subunit (SSU) processome, composed of more than 70 proteins and the RNA chaperone small nucleolar RNA (snoRNA) U3.

Its subcellular location is the nucleus. It localises to the nucleolus. Functionally, part of the small subunit (SSU) processome, first precursor of the small eukaryotic ribosomal subunit. During the assembly of the SSU processome in the nucleolus, many ribosome biogenesis factors, an RNA chaperone and ribosomal proteins associate with the nascent pre-rRNA and work in concert to generate RNA folding, modifications, rearrangements and cleavage as well as targeted degradation of pre-ribosomal RNA by the RNA exosome. Does not have cyclase activity. This is Probable RNA 3'-terminal phosphate cyclase-like protein (Rtc1) from Drosophila melanogaster (Fruit fly).